Consider the following 441-residue polypeptide: Serine/threonine-protein phosphatase 4 regulatory subunit 2 (441 aa).

Positions 201-213 (DEEEGFFDGDEDR) are enriched in acidic residues. Disordered regions lie at residues 201–220 (DEEE…NKSK), 242–348 (INDD…LTTP), and 364–418 (SPSS…SQED). Over residues 249–261 (NKGQNCQSDVTKN) the composition is skewed to polar residues. Acidic residues predominate over residues 264–302 (DDEDDDDNDDDYREDGADEDDEDDDHMGSTDDDEDDDED). T347 bears the Phosphothreonine mark. The span at 388-398 (EDAHENHEGRS) shows a compositional bias: basic and acidic residues.

This sequence belongs to the PPP4R2 family. As to quaternary structure, regulatory subunit (R2) of the histone H2A phosphatase complex (HTP-C) consisting of PPH3, PSY2 and PSY4. Interacts with SPT4 and SPT5.

It is found in the nucleus. Functionally, regulatory subunit of the histone H2A phosphatase complex, which dephosphorylates H2AS128ph (gamma-H2A) that has been displaced from sites of DNA lesions in the double-stranded DNA break repair process. Dephosphorylation is necessary for efficient recovery from the DNA damage checkpoint. This chain is Serine/threonine-protein phosphatase 4 regulatory subunit 2 (PSY4), found in Saccharomyces cerevisiae (strain ATCC 204508 / S288c) (Baker's yeast).